The sequence spans 476 residues: Calcium/calmodulin-dependent protein kinase type 1G (476 aa).

Positions 23–277 (FIFMEVLGSG…CEKALSHPWI (255 aa)) constitute a Protein kinase domain. ATP is bound by residues 29-37 (LGSGAFSEV) and Lys52. Residue Asp143 is the Proton acceptor of the active site. The segment at 277 to 317 (IDGNTALHRDIYPSVSLQIQKNFAKSKWRQAFNAAAVVHHM) is autoinhibitory domain. A calmodulin-binding region spans residues 297–318 (KNFAKSKWRQAFNAAAVVHHMR). The interval 325–352 (HSPGVRPEVENRPPETQASETSRPSSPE) is disordered. Polar residues predominate over residues 338-352 (PETQASETSRPSSPE).

Belongs to the protein kinase superfamily. CAMK Ser/Thr protein kinase family. CaMK subfamily. In terms of processing, may be prenylated on Cys-473. As to expression, mainly expressed in brain with small amounts in skeletal muscles, kidney, spleen and liver. Strongly expressed in forebrain neocortex, striatum and limbic system.

It localises to the cytoplasm. Its subcellular location is the golgi apparatus membrane. The protein resides in the cell membrane. The enzyme catalyses L-seryl-[protein] + ATP = O-phospho-L-seryl-[protein] + ADP + H(+). It carries out the reaction L-threonyl-[protein] + ATP = O-phospho-L-threonyl-[protein] + ADP + H(+). Its activity is regulated as follows. Activated by Ca(2+)/calmodulin. Binding of calmodulin is thought to result in a conformational change and leads to activation through phosphorylation by CAMKK1. Functionally, calcium/calmodulin-dependent protein kinase belonging to a proposed calcium-triggered signaling cascade. In vitro phosphorylates transcription factor CREB1. This is Calcium/calmodulin-dependent protein kinase type 1G (CAMK1G) from Homo sapiens (Human).